The following is a 476-amino-acid chain: NADH-quinone oxidoreductase subunit N (476 aa).

The next 13 membrane-spanning stretches (helical) occupy residues 7–27, 33–53, 59–79, 100–120, 122–142, 156–176, 199–219, 237–257, 265–285, 305–325, 363–383, 399–419, and 437–457; these read LTVE…GLLV, RGIA…AFGM, VVLG…LFLV, GEYY…ASSG, LVSL…LAAF, YVLL…LVYG, LLLG…AVPF, FLSV…FFGA, WVQL…LVAI, LLLG…YYAM, VAAL…MAGF, IWLA…YLLV, and VAPG…ILGI.

It belongs to the complex I subunit 2 family. In terms of assembly, NDH-1 is composed of 14 different subunits. Subunits NuoA, H, J, K, L, M, N constitute the membrane sector of the complex.

The protein resides in the cell membrane. It carries out the reaction a quinone + NADH + 5 H(+)(in) = a quinol + NAD(+) + 4 H(+)(out). Functionally, NDH-1 shuttles electrons from NADH, via FMN and iron-sulfur (Fe-S) centers, to quinones in the respiratory chain. The immediate electron acceptor for the enzyme in this species is believed to be a menaquinone. Couples the redox reaction to proton translocation (for every two electrons transferred, four hydrogen ions are translocated across the cytoplasmic membrane), and thus conserves the redox energy in a proton gradient. This is NADH-quinone oxidoreductase subunit N from Moorella thermoacetica (strain ATCC 39073 / JCM 9320).